Reading from the N-terminus, the 405-residue chain is Phosphopentomutase (405 aa).

6 residues coordinate Mn(2+): D10, D305, H310, D346, H347, and H358.

Belongs to the phosphopentomutase family. It depends on Mn(2+) as a cofactor.

It is found in the cytoplasm. It catalyses the reaction 2-deoxy-alpha-D-ribose 1-phosphate = 2-deoxy-D-ribose 5-phosphate. The enzyme catalyses alpha-D-ribose 1-phosphate = D-ribose 5-phosphate. It functions in the pathway carbohydrate degradation; 2-deoxy-D-ribose 1-phosphate degradation; D-glyceraldehyde 3-phosphate and acetaldehyde from 2-deoxy-alpha-D-ribose 1-phosphate: step 1/2. Functionally, isomerase that catalyzes the conversion of deoxy-ribose 1-phosphate (dRib-1-P) and ribose 1-phosphate (Rib-1-P) to deoxy-ribose 5-phosphate (dRib-5-P) and ribose 5-phosphate (Rib-5-P), respectively. This chain is Phosphopentomutase, found in Methylobacterium sp. (strain 4-46).